Consider the following 380-residue polypeptide: uncharacterized protein (380 aa).

The region spanning 111-369 (APYSMERHHD…DCLAILAEMI (259 aa)) is the Peptidase M14 domain. Residues H164, E167, and H257 each contribute to the Zn(2+) site. E333 (proton donor/acceptor) is an active-site residue.

The cofactor is Zn(2+).

This is an uncharacterized protein from Zymomonas mobilis subsp. mobilis (strain ATCC 31821 / ZM4 / CP4).